Reading from the N-terminus, the 118-residue chain is Large ribosomal subunit protein bL19 (118 aa).

This sequence belongs to the bacterial ribosomal protein bL19 family.

In terms of biological role, this protein is located at the 30S-50S ribosomal subunit interface and may play a role in the structure and function of the aminoacyl-tRNA binding site. The protein is Large ribosomal subunit protein bL19 of Buchnera aphidicola subsp. Baizongia pistaciae (strain Bp).